Reading from the N-terminus, the 623-residue chain is MAU2 chromatid cohesion factor homolog (623 aa).

TPR repeat units lie at residues 96–129 (FDTASLLAQLHLKTEQSPHAKAMLRRAVELSQNN), 451–484 (GGFYYVQGLHAFHKNSFHEAKRFLRETLKMANAE), and 491–524 (SCSLVLLSHVFLSIGNSKESMNMVTPAMQLASKI).

It belongs to the SCC4/mau-2 family. In terms of assembly, interacts with Nipped-B to form the cohesin loading complex.

It is found in the nucleus. The protein resides in the nucleoplasm. In terms of biological role, required for association of the cohesin complex with chromatin during interphase. Plays a role in sister chromatid cohesion and normal progression through prometaphase. The sequence is that of MAU2 chromatid cohesion factor homolog from Drosophila grimshawi (Hawaiian fruit fly).